The sequence spans 216 residues: 3-isopropylmalate dehydratase small subunit (216 aa).

Belongs to the LeuD family. LeuD type 1 subfamily. Heterodimer of LeuC and LeuD.

The enzyme catalyses (2R,3S)-3-isopropylmalate = (2S)-2-isopropylmalate. The protein operates within amino-acid biosynthesis; L-leucine biosynthesis; L-leucine from 3-methyl-2-oxobutanoate: step 2/4. Its function is as follows. Catalyzes the isomerization between 2-isopropylmalate and 3-isopropylmalate, via the formation of 2-isopropylmaleate. The protein is 3-isopropylmalate dehydratase small subunit of Bordetella avium (strain 197N).